We begin with the raw amino-acid sequence, 212 residues long: Floral homeotic protein PMADS 2 (212 aa).

The 56-residue stretch at 3–58 folds into the MADS-box domain; the sequence is RGKIEIKRIENSSNRQVTYSKRRNGIIKKAKEITVLCDAKVSLIIFGNSGKMHEYC. Positions 84 to 170 constitute a K-box domain; sequence HENLSNEIDR…QYALHQKEMA (87 aa).

As to expression, predominantly expressed in petals and stamens, less in carpels and sepals.

It localises to the nucleus. Functionally, transcription factor involved in the genetic control of flower development. This Petunia hybrida (Petunia) protein is Floral homeotic protein PMADS 2 (PMADS2).